Consider the following 957-residue polypeptide: Dystrophin-related protein 2 (957 aa).

Spectrin repeat units lie at residues 102–179 and 231–337; these read DLSG…EELE and EHLL…QLQD. The WW domain maps to 358–383; sequence WERAISPNKVPYYINHQAQTTCWDHP. A ZZ-type; degenerate zinc finger spans residues 605–661; the sequence is KHQTKCSICRQCPIKGFRYRSLKQFNVDICQTCFLTGRASKGNKLHYPIMEYYTPTT. Cys610, Cys613, Cys634, and Cys637 together coordinate Zn(2+). At Ser748 the chain carries Phosphoserine. The segment covering 876–894 has biased composition (low complexity); sequence QPPSESDGNGSAGSSLASS. The interval 876-923 is disordered; that stretch reads QPPSESDGNGSAGSSLASSPRQSEGSHPREKGQTTPDTEVADDVGSKS. Thr910 carries the post-translational modification Phosphothreonine.

In terms of assembly, interacts with PRX; this enhances phosphorylation. Identified in a dystroglycan complex that contains at least PRX, DRP2, UTRN, DMD and DAG1. Detected in quadriceps nerve Schwann cells. Detected in sciatic nerve. Detected in trigeminal nerve Schwann cells (at protein level). Detected in brain and spinal cord.

It is found in the postsynaptic density. The protein localises to the cell projection. The protein resides in the dendrite. Its subcellular location is the perikaryon. It localises to the cell membrane. Required for normal myelination and for normal organization of the cytoplasm and the formation of Cajal bands in myelinating Schwann cells. Required for normal PRX location at appositions between the abaxonal surface of the myelin sheath and the Schwann cell plasma membrane. Possibly involved in membrane-cytoskeleton interactions of the central nervous system. This chain is Dystrophin-related protein 2 (Drp2), found in Mus musculus (Mouse).